Here is a 241-residue protein sequence, read N- to C-terminus: Ubiquinone biosynthesis O-methyltransferase (241 aa).

S-adenosyl-L-methionine is bound by residues arginine 44, glycine 64, aspartate 85, and methionine 129.

This sequence belongs to the methyltransferase superfamily. UbiG/COQ3 family.

The catalysed reaction is a 3-demethylubiquinol + S-adenosyl-L-methionine = a ubiquinol + S-adenosyl-L-homocysteine + H(+). The enzyme catalyses a 3-(all-trans-polyprenyl)benzene-1,2-diol + S-adenosyl-L-methionine = a 2-methoxy-6-(all-trans-polyprenyl)phenol + S-adenosyl-L-homocysteine + H(+). It functions in the pathway cofactor biosynthesis; ubiquinone biosynthesis. O-methyltransferase that catalyzes the 2 O-methylation steps in the ubiquinone biosynthetic pathway. In Serratia proteamaculans (strain 568), this protein is Ubiquinone biosynthesis O-methyltransferase.